Here is a 429-residue protein sequence, read N- to C-terminus: Bifunctional protein GlmU (429 aa).

Positions 1-223 (MKTSILILAA…EDEFMGINDK (223 aa)) are pyrophosphorylase. Residues 8–11 (LAAG), lysine 22, glutamine 74, and 81–82 (GT) each bind UDP-N-acetyl-alpha-D-glucosamine. Residue aspartate 102 participates in Mg(2+) binding. Residues glycine 135, glutamate 149, asparagine 164, and asparagine 221 each contribute to the UDP-N-acetyl-alpha-D-glucosamine site. Asparagine 221 lines the Mg(2+) pocket. The linker stretch occupies residues 224–244 (FELSIAENFMQEKIKKYWMQQ). An N-acetyltransferase region spans residues 245 to 429 (GVIFHLPQST…KNYYYKKFQK (185 aa)). 2 residues coordinate UDP-N-acetyl-alpha-D-glucosamine: arginine 308 and lysine 325. Residue histidine 336 is the Proton acceptor of the active site. Tyrosine 339 and asparagine 350 together coordinate UDP-N-acetyl-alpha-D-glucosamine. Acetyl-CoA-binding positions include 359–360 (NY), serine 378, alanine 396, and arginine 413.

In the N-terminal section; belongs to the N-acetylglucosamine-1-phosphate uridyltransferase family. This sequence in the C-terminal section; belongs to the transferase hexapeptide repeat family. Homotrimer. Mg(2+) is required as a cofactor.

Its subcellular location is the cytoplasm. The enzyme catalyses alpha-D-glucosamine 1-phosphate + acetyl-CoA = N-acetyl-alpha-D-glucosamine 1-phosphate + CoA + H(+). It catalyses the reaction N-acetyl-alpha-D-glucosamine 1-phosphate + UTP + H(+) = UDP-N-acetyl-alpha-D-glucosamine + diphosphate. Its pathway is nucleotide-sugar biosynthesis; UDP-N-acetyl-alpha-D-glucosamine biosynthesis; N-acetyl-alpha-D-glucosamine 1-phosphate from alpha-D-glucosamine 6-phosphate (route II): step 2/2. The protein operates within nucleotide-sugar biosynthesis; UDP-N-acetyl-alpha-D-glucosamine biosynthesis; UDP-N-acetyl-alpha-D-glucosamine from N-acetyl-alpha-D-glucosamine 1-phosphate: step 1/1. It functions in the pathway bacterial outer membrane biogenesis; LPS lipid A biosynthesis. Catalyzes the last two sequential reactions in the de novo biosynthetic pathway for UDP-N-acetylglucosamine (UDP-GlcNAc). The C-terminal domain catalyzes the transfer of acetyl group from acetyl coenzyme A to glucosamine-1-phosphate (GlcN-1-P) to produce N-acetylglucosamine-1-phosphate (GlcNAc-1-P), which is converted into UDP-GlcNAc by the transfer of uridine 5-monophosphate (from uridine 5-triphosphate), a reaction catalyzed by the N-terminal domain. The sequence is that of Bifunctional protein GlmU from Campylobacter jejuni subsp. doylei (strain ATCC BAA-1458 / RM4099 / 269.97).